We begin with the raw amino-acid sequence, 348 residues long: Phosphate acyltransferase (348 aa).

This sequence belongs to the PlsX family. In terms of assembly, homodimer. Probably interacts with PlsY.

The protein resides in the cytoplasm. The catalysed reaction is a fatty acyl-[ACP] + phosphate = an acyl phosphate + holo-[ACP]. The protein operates within lipid metabolism; phospholipid metabolism. Its function is as follows. Catalyzes the reversible formation of acyl-phosphate (acyl-PO(4)) from acyl-[acyl-carrier-protein] (acyl-ACP). This enzyme utilizes acyl-ACP as fatty acyl donor, but not acyl-CoA. The protein is Phosphate acyltransferase of Pectobacterium carotovorum subsp. carotovorum (strain PC1).